The following is a 340-amino-acid chain: Selenide, water dikinase (340 aa).

The active site involves cysteine 13. ATP is bound by residues lysine 16 and 43–45; that span reads ASD. Residue aspartate 46 participates in Mg(2+) binding. Residues aspartate 63, aspartate 86, and 133–135 contribute to the ATP site; that span reads GHS. Aspartate 86 is a Mg(2+) binding site. Aspartate 221 is a Mg(2+) binding site.

This sequence belongs to the selenophosphate synthase 1 family. Class I subfamily. In terms of assembly, homodimer. Mg(2+) is required as a cofactor.

The enzyme catalyses hydrogenselenide + ATP + H2O = selenophosphate + AMP + phosphate + 2 H(+). Synthesizes selenophosphate from selenide and ATP. This chain is Selenide, water dikinase, found in Desulfitobacterium hafniense (strain DSM 10664 / DCB-2).